We begin with the raw amino-acid sequence, 106 residues long: NADH dehydrogenase [ubiquinone] iron-sulfur protein 5 (106 aa).

Residues alanine 30–arginine 74 enclose the CHCH domain. 2 consecutive short sequence motifs (cx9C motif) follow at residues cysteine 33–cysteine 43 and cysteine 56–cysteine 66. 2 cysteine pairs are disulfide-bonded: cysteine 33–cysteine 66 and cysteine 43–cysteine 56. The tract at residues isoleucine 87–proline 106 is disordered.

It belongs to the complex I NDUFS5 subunit family. In terms of assembly, mammalian complex I is composed of 45 different subunits. This is a component of the iron-sulfur (IP) fragment of the enzyme.

It localises to the mitochondrion inner membrane. The protein resides in the mitochondrion intermembrane space. Its function is as follows. Accessory subunit of the mitochondrial membrane respiratory chain NADH dehydrogenase (Complex I), that is believed not to be involved in catalysis. Complex I functions in the transfer of electrons from NADH to the respiratory chain. The immediate electron acceptor for the enzyme is believed to be ubiquinone. The chain is NADH dehydrogenase [ubiquinone] iron-sulfur protein 5 (NDUFS5) from Macaca fascicularis (Crab-eating macaque).